The following is a 283-amino-acid chain: Elongation factor Ts (283 aa).

The interval 79-82 is involved in Mg(2+) ion dislocation from EF-Tu; sequence TDFV.

The protein belongs to the EF-Ts family.

It localises to the cytoplasm. Its function is as follows. Associates with the EF-Tu.GDP complex and induces the exchange of GDP to GTP. It remains bound to the aminoacyl-tRNA.EF-Tu.GTP complex up to the GTP hydrolysis stage on the ribosome. The polypeptide is Elongation factor Ts (Pseudoalteromonas translucida (strain TAC 125)).